Reading from the N-terminus, the 356-residue chain is uncharacterized protein (356 aa).

The protein localises to the cytoplasm. The protein resides in the nucleus. This is an uncharacterized protein from Saccharomyces cerevisiae (strain ATCC 204508 / S288c) (Baker's yeast).